Here is a 292-residue protein sequence, read N- to C-terminus: MSDGLCNGISFNVSEGHGPNYIVGRYKLGFVQQGILFLDPYECLYLYFKGRITFEDSEESALKKLFSITSVERYTAYTLLKNKGYRVHEDNGTIFFRKSTEIPRSVVVVREYDEIDVGKFFTERPDFYFTVDEEGDATIYRIDEIDIKGTENNKIGKCSVTDFGDRHFTKDDLPHWMGTKFHEYRMLTDFEANLIEGKEPKGMAEEVYRDLLSRGCIVKTGFKYGTNFRVYEGEKSEHAEYLVSVVENKLIWYYISRAVRVASSVRKKMIFTTIIDGKIKYIMISRSKDIVI.

Residues Tyr231, His238, and Lys267 contribute to the active site.

It belongs to the tRNA-intron endonuclease family. Archaeal long subfamily. In terms of assembly, homodimer.

The catalysed reaction is pretRNA = a 3'-half-tRNA molecule with a 5'-OH end + a 5'-half-tRNA molecule with a 2',3'-cyclic phosphate end + an intron with a 2',3'-cyclic phosphate and a 5'-hydroxyl terminus.. Endonuclease that removes tRNA introns. Cleaves pre-tRNA at the 5'- and 3'-splice sites to release the intron. The products are an intron and two tRNA half-molecules bearing 2',3' cyclic phosphate and 5'-OH termini. Recognizes a pseudosymmetric substrate in which 2 bulged loops of 3 bases are separated by a stem of 4 bp. This chain is tRNA-splicing endonuclease, found in Thermoplasma volcanium (strain ATCC 51530 / DSM 4299 / JCM 9571 / NBRC 15438 / GSS1).